A 121-amino-acid chain; its full sequence is Basic phospholipase A2 homolog 2 (121 aa).

Intrachain disulfides connect Cys26-Cys115, Cys28-Cys44, Cys43-Cys95, Cys49-Cys121, Cys50-Cys88, Cys57-Cys81, and Cys75-Cys86. An important for membrane-damaging activities in eukaryotes and bacteria; heparin-binding region spans residues 105-117 (KKYRYHLKPLCKK).

Belongs to the phospholipase A2 family. Group II subfamily. K49 sub-subfamily. In terms of assembly, homodimer; non-covalently linked (probable alternative/compact dimer conformation in solution). In terms of tissue distribution, expressed by the venom gland.

It is found in the secreted. In terms of biological role, snake venom phospholipase A2 homolog that lacks enzymatic activity. Is myotoxic and displays edema-inducing activities in mouse paw. Also displays cytotoxic activity against myotubes. A model of myotoxic mechanism has been proposed: an apo Lys49-PLA2 is activated by the entrance of a hydrophobic molecule (e.g. fatty acid) at the hydrophobic channel of the protein leading to a reorientation of a monomer. This reorientation causes a transition between 'inactive' to 'active' states, causing alignment of C-terminal and membrane-docking sites (MDoS) side-by-side and putting the membrane-disruption sites (MDiS) in the same plane, exposed to solvent and in a symmetric position for both monomers. The MDoS region stabilizes the toxin on membrane by the interaction of charged residues with phospholipid head groups. Subsequently, the MDiS region destabilizes the membrane with penetration of hydrophobic residues. This insertion causes a disorganization of the membrane, allowing an uncontrolled influx of ions (i.e. calcium and sodium), and eventually triggering irreversible intracellular alterations and cell death. In Bothrops brazili (Brazil's lancehead), this protein is Basic phospholipase A2 homolog 2.